A 635-amino-acid polypeptide reads, in one-letter code: ATP-dependent zinc metalloprotease FtsH (635 aa).

At 1–4 (MVKN) the chain is on the cytoplasmic side. A helical membrane pass occupies residues 5 to 25 (LVLWVVVAVIMMTAYQSFNSS). The Periplasmic portion of the chain corresponds to 26–97 (SVENSTDYTT…VEGTPFERRG (72 aa)). The chain crosses the membrane as a helical span at residues 98–118 (FLSQILISWFPMLFLVGVWVF). At 119 to 635 (FMRQMQGGGG…AVENTDDFNV (517 aa)) the chain is on the cytoplasmic side. 191 to 198 (GPPGTGKT) serves as a coordination point for ATP. Residue histidine 413 coordinates Zn(2+). Glutamate 414 is a catalytic residue. 2 residues coordinate Zn(2+): histidine 417 and aspartate 491. Residues 593 to 635 (NREPVTPPSGWGEPKTQQAAYANSTTNDTKPESAVENTDDFNV) are disordered. A compositionally biased stretch (polar residues) spans 607-620 (KTQQAAYANSTTND).

This sequence in the central section; belongs to the AAA ATPase family. In the C-terminal section; belongs to the peptidase M41 family. As to quaternary structure, homohexamer. Zn(2+) is required as a cofactor.

The protein localises to the cell inner membrane. Its function is as follows. Acts as a processive, ATP-dependent zinc metallopeptidase for both cytoplasmic and membrane proteins. Plays a role in the quality control of integral membrane proteins. The protein is ATP-dependent zinc metalloprotease FtsH of Haemophilus influenzae (strain ATCC 51907 / DSM 11121 / KW20 / Rd).